Here is a 355-residue protein sequence, read N- to C-terminus: Anthranilate phosphoribosyltransferase (355 aa).

5-phospho-alpha-D-ribose 1-diphosphate contacts are provided by residues G91, 94–95 (GD), T99, 101–104 (NIST), 119–127 (KHGNRAMSS), and A131. Position 91 (G91) interacts with anthranilate. Residue S103 coordinates Mg(2+). N122 contributes to the anthranilate binding site. R177 provides a ligand contact to anthranilate. Residues D234 and E235 each coordinate Mg(2+).

Belongs to the anthranilate phosphoribosyltransferase family. Homodimer. Mg(2+) is required as a cofactor.

The catalysed reaction is N-(5-phospho-beta-D-ribosyl)anthranilate + diphosphate = 5-phospho-alpha-D-ribose 1-diphosphate + anthranilate. It functions in the pathway amino-acid biosynthesis; L-tryptophan biosynthesis; L-tryptophan from chorismate: step 2/5. Functionally, participates in the tryptophan-dependent indole-3-acetic acid production, which is a phytohormone released by A.brasilense. Catalyzes the transfer of the phosphoribosyl group of 5-phosphorylribose-1-pyrophosphate (PRPP) to anthranilate to yield N-(5'-phosphoribosyl)-anthranilate (PRA). This Azospirillum brasilense protein is Anthranilate phosphoribosyltransferase.